The chain runs to 467 residues: Xanthan biosynthesis protein XanB (467 aa).

Belongs to the mannose-6-phosphate isomerase type 2 family.

It carries out the reaction D-mannose 6-phosphate = D-fructose 6-phosphate. The enzyme catalyses alpha-D-mannose 1-phosphate + GTP + H(+) = GDP-alpha-D-mannose + diphosphate. It participates in nucleotide-sugar biosynthesis; GDP-alpha-D-mannose biosynthesis; GDP-alpha-D-mannose from alpha-D-mannose 1-phosphate (GTP route): step 1/1. Its pathway is nucleotide-sugar biosynthesis; GDP-alpha-D-mannose biosynthesis; alpha-D-mannose 1-phosphate from D-fructose 6-phosphate: step 1/2. Functionally, involved in xanthan production. This is Xanthan biosynthesis protein XanB (xanB) from Xanthomonas campestris pv. campestris (strain B100).